The sequence spans 250 residues: ATP synthase subunit a (250 aa).

6 helical membrane-spanning segments follow: residues 29 to 49 (ASLFMVATVACAAGFLYFATS), 84 to 104 (FFPMVFSLFMFVLTANLLGMM), 114 to 134 (IVVTFALAIFVIGTVLVYGFY), 143 to 163 (LFVPSGVPGALLLLVVPIEVI), 189 to 209 (VFAGFVASLGSLGALGVGGAL), and 216 to 236 (VALTGLEFLVAFLQAYVFAVL).

Belongs to the ATPase A chain family. In terms of assembly, F-type ATPases have 2 components, CF(1) - the catalytic core - and CF(0) - the membrane proton channel. CF(1) has five subunits: alpha(3), beta(3), gamma(1), delta(1), epsilon(1). CF(0) has three main subunits: a(1), b(2) and c(9-12). The alpha and beta chains form an alternating ring which encloses part of the gamma chain. CF(1) is attached to CF(0) by a central stalk formed by the gamma and epsilon chains, while a peripheral stalk is formed by the delta and b chains.

The protein resides in the cell inner membrane. Functionally, key component of the proton channel; it plays a direct role in the translocation of protons across the membrane. The sequence is that of ATP synthase subunit a from Allorhizobium ampelinum (strain ATCC BAA-846 / DSM 112012 / S4) (Agrobacterium vitis (strain S4)).